The following is a 357-amino-acid chain: Molybdenum import ATP-binding protein ModC (357 aa).

One can recognise an ABC transporter domain in the interval 1 to 233 (MRLEVEARLR…PFPTSGPGRR (233 aa)). 31 to 38 (GRSGSGKT) contacts ATP. The 65-residue stretch at 293–357 (GISALNVLPG…AVVKTVALDY (65 aa)) folds into the Mop domain.

It belongs to the ABC transporter superfamily. Molybdate importer (TC 3.A.1.8) family. The complex is composed of two ATP-binding proteins (ModC), two transmembrane proteins (ModB) and a solute-binding protein (ModA).

Its subcellular location is the cell inner membrane. The enzyme catalyses molybdate(out) + ATP + H2O = molybdate(in) + ADP + phosphate + H(+). Its function is as follows. Part of the ABC transporter complex ModABC involved in molybdenum import. Responsible for energy coupling to the transport system. In Rhizobium meliloti (strain 1021) (Ensifer meliloti), this protein is Molybdenum import ATP-binding protein ModC.